The following is a 117-amino-acid chain: MIVGLGIDLAEIDRFEKAQEKNSRFAEKVLTATEFELFSHYTGRRALEFLAGRFAVKEAFSKAYGTGIGQVKLQAVETLNDPQGKPYIKQDLFDGVVHVSLSHTATLVIAEVILERG.

Residues aspartate 8 and glutamate 58 each coordinate Mg(2+).

This sequence belongs to the P-Pant transferase superfamily. AcpS family. It depends on Mg(2+) as a cofactor.

Its subcellular location is the cytoplasm. The catalysed reaction is apo-[ACP] + CoA = holo-[ACP] + adenosine 3',5'-bisphosphate + H(+). Transfers the 4'-phosphopantetheine moiety from coenzyme A to a Ser of acyl-carrier-protein. The protein is Holo-[acyl-carrier-protein] synthase of Latilactobacillus sakei subsp. sakei (strain 23K) (Lactobacillus sakei subsp. sakei).